A 678-amino-acid polypeptide reads, in one-letter code: Proprotein convertase subtilisin/kexin type 4 (678 aa).

The N-terminal stretch at 1–26 is a signal peptide; the sequence is MRPSQTALWLGLVLSLALLAVGWASA. Residues 27 to 110 constitute a propeptide that is removed on maturation; that stretch reads RPPIYVSSWA…QQTLRRRVKR (84 aa). The Peptidase S8 domain occupies 123-437; the sequence is QWYMNKEIEQ…YGLLDAGLLV (315 aa). Residues Asp155, His196, and Ser370 each act as charge relay system in the active site. In terms of domain architecture, P/Homo B spans 446 to 580; the sequence is TKPQKKCTIR…TLLLYGTAED (135 aa). Asn472 carries an N-linked (GlcNAc...) asparagine glycan.

This sequence belongs to the peptidase S8 family. Furin subfamily. The proPCSK4 form interacts with HSPA5; the interaction takes place at the endoplasmic reticulum. In terms of processing, N-glycosylated. Synthesized in the endoplasmic reticulum as a zymogen, is matured by autocatalytic cleavage between the prodomain and the catalytic domain. As to expression, expressed abundantly in the testis. High levels seen in germ cells but not in Leydig, Sertoli or peritubular cells. Expressed in the pachytene spermatocytes and the round spermatids but not in the elongating spermatids. May be expressed within hormonally stimulated ovaries.

The protein resides in the cytoplasmic vesicle. Its subcellular location is the secretory vesicle. The protein localises to the acrosome membrane. Functionally, proprotein convertase involved in the processing of hormone and other protein precursors at sites comprised of pairs of basic amino acid residues. In males, important for ADAM2 processing as well as other acrosomal proteins with roles in fertilization and critical for normal fertilization events such as sperm capacitation, acrosome reaction and binding of sperm to zona pellucida. Plays also a role in female fertility, involved in the regulation of trophoblast migration and placental development, may be through the proteolytical processing and activation of proteins such as IGF2. May also participate in folliculogenesis in the ovaries. The sequence is that of Proprotein convertase subtilisin/kexin type 4 (Pcsk4) from Rattus norvegicus (Rat).